Reading from the N-terminus, the 121-residue chain is Structural protein p14.5 (121 aa).

Disordered regions lie at residues methionine 1–leucine 24 and threonine 84–lysine 121. Alanine 2 is modified (N-acetylalanine; by host). The segment covering lysine 104–lysine 121 has biased composition (basic residues).

It belongs to the asfivirus structural protein p14.5 family. As to quaternary structure, interacts with the major capsid protein. Interacts with host IRF3; this interaction interferes with the recruitment of IRF3 to TBK1. Post-translationally, acetylated.

It localises to the virion. Its function is as follows. Structural protein required for transport of intracellular particles from the assembly sites to the plasma membrane. Binds to both ssDNA and dsDNA. Suppressed the activation of the cGAS/STING pathway by interfering with the recruitment of IRF3 to TBK1, which in turn suppresses IRF3 phosphorylation, decreasing interferon production. The protein is Structural protein p14.5 of Ornithodoros (relapsing fever ticks).